The following is an 88-amino-acid chain: Small ribosomal subunit protein bS20 (88 aa).

This sequence belongs to the bacterial ribosomal protein bS20 family.

Its function is as follows. Binds directly to 16S ribosomal RNA. The polypeptide is Small ribosomal subunit protein bS20 (Bradyrhizobium sp. (strain BTAi1 / ATCC BAA-1182)).